A 553-amino-acid polypeptide reads, in one-letter code: Arginine--tRNA ligase (553 aa).

Positions 130 to 140 match the 'HIGH' region motif; that stretch reads ANPTGDLHIGH.

Belongs to the class-I aminoacyl-tRNA synthetase family. In terms of assembly, monomer.

It is found in the cytoplasm. The enzyme catalyses tRNA(Arg) + L-arginine + ATP = L-arginyl-tRNA(Arg) + AMP + diphosphate. This is Arginine--tRNA ligase from Staphylococcus aureus (strain USA300 / TCH1516).